A 583-amino-acid chain; its full sequence is 1-deoxy-D-xylulose-5-phosphate synthase (583 aa).

Thiamine diphosphate is bound by residues His-74 and 115-117; that span reads GHS. Asp-146 provides a ligand contact to Mg(2+). Residues 147–148, Asn-175, Phe-244, and Glu-327 each bind thiamine diphosphate; that span reads GG. Position 175 (Asn-175) interacts with Mg(2+).

It belongs to the transketolase family. DXPS subfamily. Homodimer. Mg(2+) is required as a cofactor. The cofactor is thiamine diphosphate.

The enzyme catalyses D-glyceraldehyde 3-phosphate + pyruvate + H(+) = 1-deoxy-D-xylulose 5-phosphate + CO2. It functions in the pathway metabolic intermediate biosynthesis; 1-deoxy-D-xylulose 5-phosphate biosynthesis; 1-deoxy-D-xylulose 5-phosphate from D-glyceraldehyde 3-phosphate and pyruvate: step 1/1. Functionally, catalyzes the acyloin condensation reaction between C atoms 2 and 3 of pyruvate and glyceraldehyde 3-phosphate to yield 1-deoxy-D-xylulose-5-phosphate (DXP). This chain is 1-deoxy-D-xylulose-5-phosphate synthase, found in Myxococcus xanthus (strain DK1622).